The chain runs to 880 residues: Probable LRR receptor-like serine/threonine-protein kinase At2g28960 (880 aa).

The signal sequence occupies residues 1-24 (MEGRRQRLLVFIFGALAITHLVQA). Topologically, residues 25–511 (QPPDQRGFIS…NNNNQTYIVP (487 aa)) are extracellular. Asn180, Asn201, Asn228, Asn254, Asn287, Asn403, Asn430, and Asn441 each carry an N-linked (GlcNAc...) asparagine glycan. LRR repeat units follow at residues 409-430 (RIIS…AFQN), 433-455 (ELRK…LASM), and 457-476 (SLSI…PKLL). A glycan (N-linked (GlcNAc...) asparagine) is linked at Asn505. A helical transmembrane segment spans residues 512 to 532 (VVASVASVLIIIAVLILILVF). Residues 533 to 880 (KKRRPTQVDS…FTTEINPKAR (348 aa)) are Cytoplasmic-facing. The residue at position 564 (Thr564) is a Phosphothreonine. In terms of domain architecture, Protein kinase spans 573–846 (DNFERVLGEG…QVTNELKQCL (274 aa)). ATP contacts are provided by residues 579-587 (LGEGGFGVV) and Lys601. Residue Tyr646 is modified to Phosphotyrosine. The active-site Proton acceptor is Asp698. Ser732 carries the post-translational modification Phosphoserine. Thr733 and Thr738 each carry phosphothreonine. The residue at position 746 (Tyr746) is a Phosphotyrosine. The segment at 854–880 (GVREDMGSRSSVEMSTSFTTEINPKAR) is disordered. Residues 861 to 880 (SRSSVEMSTSFTTEINPKAR) show a composition bias toward polar residues.

It belongs to the protein kinase superfamily. Ser/Thr protein kinase family.

It localises to the membrane. The catalysed reaction is L-seryl-[protein] + ATP = O-phospho-L-seryl-[protein] + ADP + H(+). It carries out the reaction L-threonyl-[protein] + ATP = O-phospho-L-threonyl-[protein] + ADP + H(+). This Arabidopsis thaliana (Mouse-ear cress) protein is Probable LRR receptor-like serine/threonine-protein kinase At2g28960.